The following is a 339-amino-acid chain: Ketol-acid reductoisomerase (NADP(+)) (339 aa).

Residues 1–182 (MRVYYDRDAD…GGGRAGIIET (182 aa)) form the KARI N-terminal Rossmann domain. NADP(+)-binding positions include 24–27 (YGSQ), R48, S51, S53, and 83–86 (DELQ). H108 is an active-site residue. Residue G134 coordinates NADP(+). The 146-residue stretch at 183–328 (SFREETETDL…ARLRDMMPWI (146 aa)) folds into the KARI C-terminal knotted domain. D191, E195, E227, and E231 together coordinate Mg(2+). S252 serves as a coordination point for substrate.

The protein belongs to the ketol-acid reductoisomerase family. It depends on Mg(2+) as a cofactor.

The enzyme catalyses (2R)-2,3-dihydroxy-3-methylbutanoate + NADP(+) = (2S)-2-acetolactate + NADPH + H(+). The catalysed reaction is (2R,3R)-2,3-dihydroxy-3-methylpentanoate + NADP(+) = (S)-2-ethyl-2-hydroxy-3-oxobutanoate + NADPH + H(+). The protein operates within amino-acid biosynthesis; L-isoleucine biosynthesis; L-isoleucine from 2-oxobutanoate: step 2/4. Its pathway is amino-acid biosynthesis; L-valine biosynthesis; L-valine from pyruvate: step 2/4. Involved in the biosynthesis of branched-chain amino acids (BCAA). Catalyzes an alkyl-migration followed by a ketol-acid reduction of (S)-2-acetolactate (S2AL) to yield (R)-2,3-dihydroxy-isovalerate. In the isomerase reaction, S2AL is rearranged via a Mg-dependent methyl migration to produce 3-hydroxy-3-methyl-2-ketobutyrate (HMKB). In the reductase reaction, this 2-ketoacid undergoes a metal-dependent reduction by NADPH to yield (R)-2,3-dihydroxy-isovalerate. This is Ketol-acid reductoisomerase (NADP(+)) from Afipia carboxidovorans (strain ATCC 49405 / DSM 1227 / KCTC 32145 / OM5) (Oligotropha carboxidovorans).